The following is a 401-amino-acid chain: Stearoyl-[acyl-carrier-protein] 9-desaturase 3, chloroplastic (401 aa).

The segment at 1 to 31 is disordered; sequence MSMALLLTSPAMKQKPAVITSPRRGSSPSRR. The N-terminal 35 residues, 1 to 35, are a transit peptide targeting the chloroplast; sequence MSMALLLTSPAMKQKPAVITSPRRGSSPSRRLRVS. 6 residues coordinate Fe cation: glutamate 140, glutamate 178, histidine 181, glutamate 231, glutamate 264, and histidine 267.

It belongs to the fatty acid desaturase type 2 family. In terms of assembly, homodimer. Fe(2+) is required as a cofactor. As to expression, ubiquitously expressed with a preference in leaves, flowers and stems.

The protein resides in the plastid. It is found in the chloroplast. It catalyses the reaction octadecanoyl-[ACP] + 2 reduced [2Fe-2S]-[ferredoxin] + O2 + 2 H(+) = (9Z)-octadecenoyl-[ACP] + 2 oxidized [2Fe-2S]-[ferredoxin] + 2 H2O. It participates in lipid metabolism; fatty acid metabolism. Functionally, converts stearoyl-ACP to oleoyl-ACP by introduction of a cis double bond between carbons 9 and 10 of the acyl chain. Also able to convert palmitoyl-ACP to palmitoleoyl-ACP at the C9 position. Exhibits delta-9 palmitoyl-[acyl-carrier-protein] desaturase (PAD) activity. Involved in omega-7 monounsaturated fatty acid biosynthesis, especially in the endosperm oil. This is Stearoyl-[acyl-carrier-protein] 9-desaturase 3, chloroplastic (S-ACP-DES3) from Arabidopsis thaliana (Mouse-ear cress).